Consider the following 304-residue polypeptide: Recombination-associated protein RdgC (304 aa).

It belongs to the RdgC family.

The protein resides in the cytoplasm. It localises to the nucleoid. Its function is as follows. May be involved in recombination. The polypeptide is Recombination-associated protein RdgC (Shewanella sp. (strain W3-18-1)).